The sequence spans 407 residues: Na(+)-translocating NADH-quinone reductase subunit F (407 aa).

A helical transmembrane segment spans residues 3-23 (IILGVVMFTLIVLALVLVILF). Positions 32–126 (GDITISINGD…DMDIELPEEI (95 aa)) constitute a 2Fe-2S ferredoxin-type domain. 4 residues coordinate [2Fe-2S] cluster: Cys-69, Cys-75, Cys-78, and Cys-110. The FAD-binding FR-type domain maps to 129–269 (VKKWECTVIS…SGPFGEFFAK (141 aa)). The catalytic stretch occupies residues 272 to 389 (DAEMVFIGGG…PMMNAAVIGM (118 aa)).

This sequence belongs to the NqrF family. As to quaternary structure, composed of six subunits; NqrA, NqrB, NqrC, NqrD, NqrE and NqrF. Requires [2Fe-2S] cluster as cofactor. FAD serves as cofactor.

Its subcellular location is the cell inner membrane. The enzyme catalyses a ubiquinone + n Na(+)(in) + NADH + H(+) = a ubiquinol + n Na(+)(out) + NAD(+). NQR complex catalyzes the reduction of ubiquinone-1 to ubiquinol by two successive reactions, coupled with the transport of Na(+) ions from the cytoplasm to the periplasm. The first step is catalyzed by NqrF, which accepts electrons from NADH and reduces ubiquinone-1 to ubisemiquinone by a one-electron transfer pathway. The chain is Na(+)-translocating NADH-quinone reductase subunit F from Vibrio vulnificus (strain CMCP6).